A 780-amino-acid chain; its full sequence is E3 UFM1-protein ligase 1 homolog (780 aa).

Residues 403 to 413 (STSSTNPNHST) show a composition bias toward polar residues. Disordered stretches follow at residues 403–458 (STSS…RSHI) and 734–760 (SSDK…NIDL). 2 stretches are compositionally biased toward basic and acidic residues: residues 443 to 458 (KDRS…RSHI) and 736 to 750 (DKQK…KDSD).

The protein belongs to the UFL1 family.

Its function is as follows. E3 UFM1-protein ligase that mediates ufmylation of target proteins. The chain is E3 UFM1-protein ligase 1 homolog from Trichoplax adhaerens (Trichoplax reptans).